The sequence spans 198 residues: Large ribosomal subunit protein bL25 (198 aa).

This sequence belongs to the bacterial ribosomal protein bL25 family. CTC subfamily. Part of the 50S ribosomal subunit; part of the 5S rRNA/L5/L18/L25 subcomplex. Contacts the 5S rRNA. Binds to the 5S rRNA independently of L5 and L18.

In terms of biological role, this is one of the proteins that binds to the 5S RNA in the ribosome where it forms part of the central protuberance. The sequence is that of Large ribosomal subunit protein bL25 from Bordetella avium (strain 197N).